Here is a 353-residue protein sequence, read N- to C-terminus: Histidinol-phosphate aminotransferase (353 aa).

Lysine 214 carries the N6-(pyridoxal phosphate)lysine modification.

This sequence belongs to the class-II pyridoxal-phosphate-dependent aminotransferase family. Histidinol-phosphate aminotransferase subfamily. As to quaternary structure, homodimer. Requires pyridoxal 5'-phosphate as cofactor.

The enzyme catalyses L-histidinol phosphate + 2-oxoglutarate = 3-(imidazol-4-yl)-2-oxopropyl phosphate + L-glutamate. Its pathway is amino-acid biosynthesis; L-histidine biosynthesis; L-histidine from 5-phospho-alpha-D-ribose 1-diphosphate: step 7/9. The sequence is that of Histidinol-phosphate aminotransferase from Gloeobacter violaceus (strain ATCC 29082 / PCC 7421).